We begin with the raw amino-acid sequence, 340 residues long: Glycerol-3-phosphate dehydrogenase [NAD(P)+] (340 aa).

NADPH contacts are provided by Ser-14, Phe-15, Arg-35, and Lys-108. Positions 108 and 136 each coordinate sn-glycerol 3-phosphate. Ala-140 provides a ligand contact to NADPH. 5 residues coordinate sn-glycerol 3-phosphate: Lys-191, Asp-244, Ser-254, Arg-255, and Asn-256. Lys-191 (proton acceptor) is an active-site residue. Arg-255 is an NADPH binding site. Glu-281 lines the NADPH pocket.

Belongs to the NAD-dependent glycerol-3-phosphate dehydrogenase family.

The protein localises to the cytoplasm. It catalyses the reaction sn-glycerol 3-phosphate + NAD(+) = dihydroxyacetone phosphate + NADH + H(+). The enzyme catalyses sn-glycerol 3-phosphate + NADP(+) = dihydroxyacetone phosphate + NADPH + H(+). The protein operates within membrane lipid metabolism; glycerophospholipid metabolism. Catalyzes the reduction of the glycolytic intermediate dihydroxyacetone phosphate (DHAP) to sn-glycerol 3-phosphate (G3P), the key precursor for phospholipid synthesis. This Pseudomonas aeruginosa (strain LESB58) protein is Glycerol-3-phosphate dehydrogenase [NAD(P)+].